Reading from the N-terminus, the 858-residue chain is MVNFTVDQIRAIMDKKANIRNMSVIAHVDHGKSTLTDSLVCKAGIIASARAGETRFTDTRKDEQERCITIKSTAISLFYELSENDLNFIKQSKDGSGFLINLIDSPGHVDFSSEVTAALRVTDGALVVVDCVSGVCVQTETVLRQAIAERIKPVLMMNKMDRALLELQLEPEELYQTFQRIVENVNVIISTYGEGESGPMGNIMIDPVLGTVGFGSGLHGWAFTLKQFAEMYVAKFAAKGEGQLSAAERAKKVEDMMKKLWGDRYFDPANGKFSKSANSPDGKKLPRTFCQLILDPIFKVFDAIMNFRKEETAKLIEKLDIKLDSEDKDKEGKPLLKAVMRRWLPAGDALLQMITIHLPSPVTAQKYRCELLYEGPPDDEAAMGIKSCDPKGPLMMYISKMVPTSDKGRFYAFGRVFSGVVSTGLKVRIMGPNYTPGKKEDLYLKPIQRTILMMGRYVEPIEDVPCGNIVGLVGVDQFLVKTGTITTFEHAHNMRVMKFSVSPVVRVAVEAKNPADLPKLVEGLKRLAKSDPMVQCIIEESGEHIIAGAGELHLEICLKDLEEDHACIPIKKSDPVVSYRETVSEESNVLCLSKSPNKHNRLYMKARPFPDGLAEDIDKGEVSARQELKARARYLAEKYEWDVAEARKIWCFGPDGTGPNILTDITKGVQYLNEIKDSVVAGFQWATKEGALCEENMRGVRFDVHDVTLHADAIHRGGGQIIPTARRCLYASVLTAQPRLMEPIYLVEIQCPEQVVGGIYGVLNRKRGHVFEESQVAGTPMFVVKAYLPVNESFGFTADLRSNTGGQAFPQCVFDHWQILPGDPFDNSSRPSQVVAETRKRKGLKEGIPALDNFLDKL.

A tr-type G domain is found at alanine 17–valine 362. Residue alanine 26 to serine 33 participates in GTP binding. Position 54 is a phosphothreonine (threonine 54). Phosphothreonine; by EEF2K is present on threonine 57. Threonine 59 bears the Phosphothreonine mark. Lysine 152 carries the post-translational modification N6-succinyllysine. GTP contacts are provided by residues asparagine 158 to aspartate 161 and serine 216 to leucine 218. Lysine 235 carries the N6-acetyllysine modification. An N6-acetyllysine; alternate modification is found at lysine 239. Lysine 239 participates in a covalent cross-link: Glycyl lysine isopeptide (Lys-Gly) (interchain with G-Cter in SUMO1); alternate. Tyrosine 265 carries the phosphotyrosine; by CSK modification. At lysine 272 the chain carries N6-acetyllysine; alternate. Lysine 272 is modified (N6-succinyllysine; alternate). Residue lysine 275 is modified to N6-acetyllysine. Lysine 322 is covalently cross-linked (Glycyl lysine isopeptide (Lys-Gly) (interchain with G-Cter in SUMO)). At serine 325 the chain carries Phosphoserine. The residue at position 373 (tyrosine 373) is a Phosphotyrosine; by CSK. Residue threonine 435 is modified to Phosphothreonine. Lysine 439 and lysine 445 each carry N6-acetyllysine. Phosphoserine is present on serine 502. An N6,N6,N6-trimethyllysine; by EEF2KMT modification is found at lysine 525. A Glycyl lysine isopeptide (Lys-Gly) (interchain with G-Cter in SUMO) cross-link involves residue lysine 529. Lysine 572 is modified (N6-succinyllysine). The residue at position 595 (serine 595) is a Phosphoserine; by CDK2. Lysine 619 carries the N6-acetyllysine modification. Histidine 715 bears the Diphthamide mark.

This sequence belongs to the TRAFAC class translation factor GTPase superfamily. Classic translation factor GTPase family. EF-G/EF-2 subfamily. Binds to 80S ribosomes. Actively translating ribosomes show mutually exclusive binding of eIF5a (EIF5A or EIF5A2) and EEF2/eEF2. Interacts with SERBP1; interaction sequesters EEF2/eEF2 at the A-site of the ribosome, thereby blocking the interaction sites of the mRNA-tRNA complex, promoting ribosome stabilization and hibernation. Interacts with HABP4; interaction takes place at the A-site of hibernating ribosomes and promotes ribosome stabilization. Component of the mRNA surveillance SURF complex, at least composed of ERF1, ERF3 (ERF3A or ERF3B), EEF2, UPF1/RENT1, SMG1, SMG8 and SMG9. Interacts with RBPMS2. In terms of processing, phosphorylation by EF-2 kinase completely inactivates EF-2; it requires prior phosphorylation by CDK2 at Ser-595 during mitotic prometaphase. Phosphorylation by CSK promotes SUMOylation, proteolytic cleavage, and nuclear translocation if the C-terminal fragment. Diphthamide is 2-[3-carboxyamido-3-(trimethyl-ammonio)propyl]histidine. Post-translationally, ISGylated. In terms of processing, proteolytically processed at two sites following phosphorylation by CSK. SUMOylated following phosphorylation by CSK, promotes proteolytic cleavage.

The protein localises to the cytoplasm. It localises to the nucleus. The enzyme catalyses GTP + H2O = GDP + phosphate + H(+). Its function is as follows. Catalyzes the GTP-dependent ribosomal translocation step during translation elongation. During this step, the ribosome changes from the pre-translocational (PRE) to the post-translocational (POST) state as the newly formed A-site-bound peptidyl-tRNA and P-site-bound deacylated tRNA move to the P and E sites, respectively. Catalyzes the coordinated movement of the two tRNA molecules, the mRNA and conformational changes in the ribosome. In Mus musculus (Mouse), this protein is Elongation factor 2 (Eef2).